We begin with the raw amino-acid sequence, 905 residues long: A disintegrin and metalloproteinase with thrombospondin motifs 8 (905 aa).

Residues 1 to 28 form the signal peptide; sequence MLRDPTTTGWPPLLLLLLQLPPPPLVCG. A propeptide spanning residues 29–228 is cleaved from the precursor; that stretch reads APAGPGTGAQ…PFGSKTRSKR (200 aa). Disordered stretches follow at residues 139-163 and 186-225; these read PQGAGDSLDQPHRLQRWGPGQRRED and NGQGQERSDNEEDRKQDKEGLLKETEDSRKVPPPFGSKTR. Positions 191-215 are enriched in basic and acidic residues; it reads ERSDNEEDRKQDKEGLLKETEDSRK. The Peptidase M12B domain maps to 234–444; it reads RFVETLLVAD…GHGDCLLDAP (211 aa). 10 disulfide bridges follow: C309–C362, C338–C344, C356–C439, C394–C423, C478–C502, C487–C523, C517–C528, C554–C591, C558–C596, and C569–C581. H378 contributes to the Zn(2+) binding site. E379 is a catalytic residue. Zn(2+)-binding residues include H382 and H388. 3 N-linked (GlcNAc...) asparagine glycosylation sites follow: N415, N480, and N506. In terms of domain architecture, Disintegrin spans 453–541; the sequence is GLPGHSTLYE…EDVENPKAVV (89 aa). Residues 542 to 597 form the TSP type-1 1 domain; sequence DGDWGPWRPWGQCSRTCGGGIQFSNRECDNPMPQNGGRFCLGERVKYQSCNTEECP. N-linked (GlcNAc...) asparagine glycosylation occurs at N615. A spacer region spans residues 706-847; it reads RKISGSFTPF…RATTNIIQSL (142 aa). In terms of domain architecture, TSP type-1 2 spans 848–904; the sequence is PSAEWVLGDWSECPSTCRGSWQRRTVECRDPSGQASDTCDEALKPEDAKPCGSQPCP. Residues 877–905 form a disordered region; it reads DPSGQASDTCDEALKPEDAKPCGSQPCPL.

Zn(2+) is required as a cofactor. Post-translationally, the precursor is cleaved by a furin endopeptidase. Glycosylated. Can be O-fucosylated by POFUT2 on a serine or a threonine residue found within the consensus sequence C1-X(2)-(S/T)-C2-G of the TSP type-1 repeat domains where C1 and C2 are the first and second cysteine residue of the repeat, respectively. Fucosylated repeats can then be further glycosylated by the addition of a beta-1,3-glucose residue by the glucosyltransferase, B3GALTL. Fucosylation mediates the efficient secretion of ADAMTS family members. Can also be C-glycosylated with one or two mannose molecules on tryptophan residues within the consensus sequence W-X-X-W of the TPRs, and N-glycosylated. These other glycosylations can also facilitate secretion. In terms of tissue distribution, expressed specifically in adult lung and heart and low expression during mouse development.

It localises to the secreted. The protein localises to the extracellular space. It is found in the extracellular matrix. Has anti-angiogenic properties. In Mus musculus (Mouse), this protein is A disintegrin and metalloproteinase with thrombospondin motifs 8 (Adamts8).